The primary structure comprises 213 residues: ATP synthase peripheral stalk subunit OSCP, mitochondrial (213 aa).

The transit peptide at M1 to P23 directs the protein to the mitochondrion. The short motif at A5 to P23 is the SIFI-degron element. K54, K60, K70, and K73 each carry N6-acetyllysine. K90 is modified (N6-succinyllysine). N6-acetyllysine; alternate occurs at positions 158 and 162. Residues K158 and K162 each carry the N6-succinyllysine; alternate modification. N6-acetyllysine occurs at positions 172, 176, and 192. The residue at position 199 (K199) is an N6-succinyllysine.

It belongs to the ATPase delta chain family. Component of the ATP synthase complex composed at least of ATP5F1A/subunit alpha, ATP5F1B/subunit beta, ATP5MC1/subunit c (homooctomer), MT-ATP6/subunit a, MT-ATP8/subunit 8, ATP5ME/subunit e, ATP5MF/subunit f, ATP5MG/subunit g, ATP5MK/subunit k, ATP5MJ/subunit j, ATP5F1C/subunit gamma, ATP5F1D/subunit delta, ATP5F1E/subunit epsilon, ATP5PF/subunit F6, ATP5PB/subunit b, ATP5PD/subunit d, ATP5PO/subunit OSCP. ATP synthase complex consists of a soluble F(1) head domain (subunits alpha(3) and beta(3)) - the catalytic core - and a membrane F(0) domain - the membrane proton channel (subunits c, a, 8, e, f, g, k and j). These two domains are linked by a central stalk (subunits gamma, delta, and epsilon) rotating inside the F1 region and a stationary peripheral stalk (subunits F6, b, d, and OSCP). Post-translationally, acetylation at Lys-162 decreases ATP production. Deacetylated by SIRT3. In response to mitochondrial stress, the precursor protein is ubiquitinated by the SIFI complex in the cytoplasm before mitochondrial import, leading to its degradation. Within the SIFI complex, UBR4 initiates ubiquitin chain that are further elongated or branched by KCMF1.

It localises to the mitochondrion. It is found in the mitochondrion inner membrane. In terms of biological role, subunit OSCP, of the mitochondrial membrane ATP synthase complex (F(1)F(0) ATP synthase or Complex V) that produces ATP from ADP in the presence of a proton gradient across the membrane which is generated by electron transport complexes of the respiratory chain. ATP synthase complex consist of a soluble F(1) head domain - the catalytic core - and a membrane F(1) domain - the membrane proton channel. These two domains are linked by a central stalk rotating inside the F(1) region and a stationary peripheral stalk. During catalysis, ATP synthesis in the catalytic domain of F(1) is coupled via a rotary mechanism of the central stalk subunits to proton translocation. In vivo, can only synthesize ATP although its ATP hydrolase activity can be activated artificially in vitro. Part of the complex F(0) domain. Part of the complex F(0) domain and the peripheric stalk, which acts as a stator to hold the catalytic alpha(3)beta(3) subcomplex and subunit a/ATP6 static relative to the rotary elements. The chain is ATP synthase peripheral stalk subunit OSCP, mitochondrial from Callithrix jacchus (White-tufted-ear marmoset).